A 157-amino-acid polypeptide reads, in one-letter code: Protein Smg (157 aa).

It belongs to the Smg family.

The sequence is that of Protein Smg from Yersinia pestis (strain Pestoides F).